The sequence spans 524 residues: Serine/threonine-protein phosphatase 2A 56 kDa regulatory subunit gamma isoform (524 aa).

Position 1 is an N-acetylmethionine (Met-1). The tract at residues Ser-476 to Ala-508 is disordered.

This sequence belongs to the phosphatase 2A regulatory subunit B56 family. As to quaternary structure, PP2A consists of a common heterodimeric core enzyme, composed of PPP2CA a 36 kDa catalytic subunit (subunit C) and PPP2R1A a 65 kDa constant regulatory subunit (PR65 or subunit A), that associates with a variety of regulatory subunits. Proteins that associate with the core dimer include three families of regulatory subunits B (the R2/B/PR55/B55, R3/B''/PR72/PR130/PR59 and R5/B'/B56 families), the 48 kDa variable regulatory subunit, viral proteins, and cell signaling molecules. Interacts with SGO1. Interacts with SGO1; the interaction is direct. May interact with TP53. Interacts with IER3 and/or ERK kinases; regulates ERK dephosphorylation. Interacts with CIP2A; this interaction stabilizes CIP2A. Highest levels in heart, liver and brain. Lower levels in skeletal muscle, spleen, kidney and lung. Isoform 4 is testis-specific.

The protein resides in the nucleus. It is found in the chromosome. The protein localises to the centromere. The B regulatory subunit might modulate substrate selectivity and catalytic activity, and might also direct the localization of the catalytic enzyme to a particular subcellular compartment. The PP2A-PPP2R5C holoenzyme may activate TP53 and play a role in DNA damage-induced inhibition of cell proliferation. PP2A-PPP2R5C may also regulate the ERK signaling pathway through ERK dephosphorylation. In Mus musculus (Mouse), this protein is Serine/threonine-protein phosphatase 2A 56 kDa regulatory subunit gamma isoform (Ppp2r5c).